The primary structure comprises 233 residues: uncharacterized protein (233 aa).

Belongs to the asfivirus H233R family.

This is an uncharacterized protein from African swine fever virus (strain Badajoz 1971 Vero-adapted) (Ba71V).